Reading from the N-terminus, the 426-residue chain is Glutamate-1-semialdehyde 2,1-aminomutase (426 aa).

N6-(pyridoxal phosphate)lysine is present on lysine 265.

Belongs to the class-III pyridoxal-phosphate-dependent aminotransferase family. HemL subfamily. Homodimer. The cofactor is pyridoxal 5'-phosphate.

It localises to the cytoplasm. The enzyme catalyses (S)-4-amino-5-oxopentanoate = 5-aminolevulinate. It functions in the pathway porphyrin-containing compound metabolism; protoporphyrin-IX biosynthesis; 5-aminolevulinate from L-glutamyl-tRNA(Glu): step 2/2. The sequence is that of Glutamate-1-semialdehyde 2,1-aminomutase from Salmonella choleraesuis (strain SC-B67).